The following is a 374-amino-acid chain: Protein RecA (374 aa).

66 to 73 (GPESSGKT) provides a ligand contact to ATP. Residues 326–374 (KLGVGVHPEESATEPGADAASAAPADAAPAVPAPTTAKATKSKATAAKS) form a disordered region. The span at 338–374 (TEPGADAASAAPADAAPAVPAPTTAKATKSKATAAKS) shows a compositional bias: low complexity.

The protein belongs to the RecA family.

It localises to the cytoplasm. Functionally, can catalyze the hydrolysis of ATP in the presence of single-stranded DNA, the ATP-dependent uptake of single-stranded DNA by duplex DNA, and the ATP-dependent hybridization of homologous single-stranded DNAs. It interacts with LexA causing its activation and leading to its autocatalytic cleavage. In Streptomyces coelicolor (strain ATCC BAA-471 / A3(2) / M145), this protein is Protein RecA.